Here is a 1036-residue protein sequence, read N- to C-terminus: Ubiquitin carboxyl-terminal hydrolase 48 (1036 aa).

The USP domain occupies 89-421 (VGLTNLGASC…NAYMLVYRLQ (333 aa)). Residue Cys-98 is the Nucleophile of the active site. His-353 acts as the Proton acceptor in catalysis. DUSP domains lie at 460–554 (QSVD…KALC), 569–692 (NQLN…YKEC), and 712–825 (MIAK…RIEV). Residues 611 to 644 (DEQDGEAEQSNGKINGSPFSKDESKEEKKEEEEE) are disordered. Positions 618-628 (EQSNGKINGSP) are enriched in polar residues. The interval 881–924 (APELNVSSSETEEDKEEAKPDGEKDPDFNQSNGGTKRQKTSQQG) is disordered. Phosphoserine occurs at positions 887, 888, and 889. The segment covering 896-907 (EEAKPDGEKDPD) has biased composition (basic and acidic residues). Residues 908–924 (FNQSNGGTKRQKTSQQG) are compositionally biased toward polar residues. Positions 930–1010 (KQVIRRSTRH…ILLKADEPIA (81 aa)) constitute a Ubiquitin-like domain. Lys-957 carries the post-translational modification N6-acetyllysine.

The protein belongs to the peptidase C19 family. In terms of assembly, interacts with TRAF2 and RELA. Interacts with GPS1. Present in the brain, in particular in the postsynaptic density and the dendritic lipid raft fractions (at protein level).

It localises to the cytoplasm. Its subcellular location is the nucleus. The protein resides in the cell projection. The protein localises to the cilium. It catalyses the reaction Thiol-dependent hydrolysis of ester, thioester, amide, peptide and isopeptide bonds formed by the C-terminal Gly of ubiquitin (a 76-residue protein attached to proteins as an intracellular targeting signal).. Deubiquitinase that recognizes and hydrolyzes the peptide bond at the C-terminal Gly of ubiquitin. Involved in the processing of polyubiquitin precursors as well as that of ubiquitinated proteins. Plays a role in the regulation of NF-kappa-B activation by TNF receptor superfamily via its interactions with RELA and TRAF2. May also play a regulatory role at postsynaptic sites. Plays an important role in cell cycle progression by deubiquitinating Aurora B/AURKB and thereby extending its stability. In the context of H. pylori infection, stabilizes nuclear RELA through deubiquitination, thereby promoting the transcriptional activity of RELA to prolong TNFAIP3 de novo synthesis. Consequently, TNFAIP3 suppresses caspase activity and apoptotic cell death. Also functions in the modulation of the ciliary and synaptic transport as well as cytoskeleton organization, which are key for photoreceptor function and homeostasis. To achieve this, stabilizes the levels of the retinal degeneration-associated proteins ARL3 and UNC119 using distinct mechanisms. Plays a positive role in pyroptosis by stabilizing gasdermin E/GSDME through removal of its 'Lys-48'-linked ubiquitination. This Rattus norvegicus (Rat) protein is Ubiquitin carboxyl-terminal hydrolase 48 (Usp48).